Consider the following 304-residue polypeptide: MGGFVKTQKTHAYFKRFQVKFKRRRQGKTDYRARIRLTNQDKNKYNTPKYRFVVRFTNKDITAQIVYATIAGDIVMAAAYSHELPRYGLEVGLTNYAAAYCTGLLLARRVLTLRGLDQEYEGNVEATGEDYYVEPADERRPFRALLDVGLIRTTTGNRVFGALKGALDGGLDIPHSDKRFAGFKKDEKQLDSDIHRKYIYGGHVADYMRSMAEEEPEKFQAHFSEYLKKGIDADGMESLYKKVHAAIRADPTMAKSTKKEPATHKRYNLKKLTYEQRKASLVERLNALNSSAGADDDDEEEDDE.

The protein belongs to the universal ribosomal protein uL18 family. In terms of assembly, component of the large ribosomal subunit (LSU).

It is found in the cytoplasm. The protein resides in the nucleus. Functionally, component of the ribosome, a large ribonucleoprotein complex responsible for the synthesis of proteins in the cell. The small ribosomal subunit (SSU) binds messenger RNAs (mRNAs) and translates the encoded message by selecting cognate aminoacyl-transfer RNA (tRNA) molecules. The large subunit (LSU) contains the ribosomal catalytic site termed the peptidyl transferase center (PTC), which catalyzes the formation of peptide bonds, thereby polymerizing the amino acids delivered by tRNAs into a polypeptide chain. The nascent polypeptides leave the ribosome through a tunnel in the LSU and interact with protein factors that function in enzymatic processing, targeting, and the membrane insertion of nascent chains at the exit of the ribosomal tunnel. The chain is Large ribosomal subunit protein uL18y (RPL5B) from Oryza sativa subsp. japonica (Rice).